The sequence spans 333 residues: 4-hydroxyproline 2-epimerase (333 aa).

Cys91 functions as the Proton acceptor in the catalytic mechanism. Substrate-binding positions include 92-93 (GH), His225, and Asp250. The active-site Proton donor is Cys254. 255 to 256 (GT) contacts substrate.

Belongs to the proline racemase family.

It catalyses the reaction trans-4-hydroxy-L-proline = cis-4-hydroxy-D-proline. In terms of biological role, catalyzes the epimerization of trans-4-hydroxy-L-proline (t4LHyp) to cis-4-hydroxy-D-proline (c4DHyp). Is likely involved in a degradation pathway that converts t4LHyp to alpha-ketoglutarate. Displays no proline racemase activity. This is 4-hydroxyproline 2-epimerase from Streptosporangium roseum (strain ATCC 12428 / DSM 43021 / JCM 3005 / KCTC 9067 / NCIMB 10171 / NRRL 2505 / NI 9100).